The chain runs to 367 residues: Riboflavin biosynthesis protein RibD (367 aa).

The region spanning 1–123 (MQDEYYMARA…RLQQAGIDVS (123 aa)) is the CMP/dCMP-type deaminase domain. A deaminase region spans residues 1 to 145 (MQDEYYMARA…KGFLKRMRTG (145 aa)). His50 serves as a coordination point for Zn(2+). The active-site Proton donor is Glu52. Zn(2+)-binding residues include Cys75 and Cys84. Positions 146–367 (FPYIQLKLGA…PDVCLHLVGA (222 aa)) are reductase. 161 to 164 (TAMA) contributes to the NADP(+) binding site. Ser168 contributes to the substrate binding site. An NADP(+)-binding site is contributed by Trp170. Arg184 contacts substrate. 2 residues coordinate NADP(+): Thr196 and Asp200. Leu204 and Arg207 together coordinate substrate. An NADP(+)-binding site is contributed by Ser234. Glu299 contributes to the substrate binding site. Residue 301–304 (GPTL) coordinates NADP(+).

The protein in the N-terminal section; belongs to the cytidine and deoxycytidylate deaminase family. In the C-terminal section; belongs to the HTP reductase family. Homodimer. Zn(2+) is required as a cofactor.

It carries out the reaction 2,5-diamino-6-hydroxy-4-(5-phosphoribosylamino)-pyrimidine + H2O + H(+) = 5-amino-6-(5-phospho-D-ribosylamino)uracil + NH4(+). The enzyme catalyses 5-amino-6-(5-phospho-D-ribitylamino)uracil + NADP(+) = 5-amino-6-(5-phospho-D-ribosylamino)uracil + NADPH + H(+). It participates in cofactor biosynthesis; riboflavin biosynthesis; 5-amino-6-(D-ribitylamino)uracil from GTP: step 2/4. It functions in the pathway cofactor biosynthesis; riboflavin biosynthesis; 5-amino-6-(D-ribitylamino)uracil from GTP: step 3/4. In terms of biological role, converts 2,5-diamino-6-(ribosylamino)-4(3h)-pyrimidinone 5'-phosphate into 5-amino-6-(ribosylamino)-2,4(1h,3h)-pyrimidinedione 5'-phosphate. The polypeptide is Riboflavin biosynthesis protein RibD (ribD) (Escherichia coli (strain K12)).